A 666-amino-acid chain; its full sequence is MNKTFKYIVLLALACFVGKANAQELKTEVFSLLNLDYPGLEKVKALHQEGKDADAAKALLDYYRARTNVKTPDINLKKVTIGKDEQKMADEALQHTFFAHKGYQPSFNYGEDIDWRYWPVKDNELRWQLHRHKWFTPMGKAYRVSGDEKYAVEWTKQYIDWIKKNPLVKVDKKEYEMTGDNQLKGDVENARFAWRPLEVSNRLQDQTSQFQLFLPSPSFTPEFLTEFLVNYHKHAIHILGIYSAQGNHLLFEAQRMIYAGAFFPEFKEAAAWRKSGIDIMNREINVQVYNDGGQFELDPHYHLAAINIFCKALNIADLYGFRNEFPQEYLDTIEKMIVFYANVSFPDYTNPCFSDAKLTNKKEMLKNYRNWSKMFPKNQFIKYLATDGKEGALPEYLSKGFLKSGFFVFRNSWGTDATQMVVKAGPKAFWHCQPDNGTFELWFNGKNLFPDSGSYVYAGEGEVMEQRNWHRQTCVHNTVTLNNKNLDQTESVTKLWQPEGNVQILVTENPSYKNLKHRRSVFFVDNSYFVIVDEMVGSQKGSINLHYQMPKGEIANSREDMTFVTQFEEGSNMKLQCFGPEGMTMKKEPGWCSTAYRKRYKRMNVSFNVKKDSEDAVRYITVICPIKNSADAPKLSAKFKNKTFNENGLEVEVKVNGKKQSLNYKL.

A signal peptide spans 1–22 (MNKTFKYIVLLALACFVGKANA). The Proton acceptor role is filled by Tyr301.

The protein belongs to the polysaccharide lyase 12 family.

The protein localises to the periplasm. It catalyses the reaction Elimination of sulfate, appears to act on linkages between N-acetyl-D-glucosamine and uronate. Product is an unsaturated sugar.. In terms of biological role, specifically cleaves heparan sulfate-rich regions of acidic polysaccharides. Also able to degrade heparin and hyaluronic acid. Does not act on N,O-desulfated glucosamine or N-acetyl-O-sulfated glucosamine linkages. Functions in cleaving metazoan heparan sulfate and providing carbon, nitrogen and sulfate sources for microorganisms. The polypeptide is Heparin-sulfate lyase (hepC) (Bacteroides stercoris).